A 482-amino-acid polypeptide reads, in one-letter code: Hydroxymethylglutaryl-CoA synthase A (482 aa).

The Proton donor/acceptor role is filled by Glu85. The active-site Acyl-thioester intermediate is Cys119. Residues Cys119, Thr161, Ser211, His249, Lys258, Asn325, and Ser358 each contribute to the (3S)-3-hydroxy-3-methylglutaryl-CoA site. His249 serves as the catalytic Proton donor/acceptor.

The protein belongs to the thiolase-like superfamily. HMG-CoA synthase family.

It catalyses the reaction acetoacetyl-CoA + acetyl-CoA + H2O = (3S)-3-hydroxy-3-methylglutaryl-CoA + CoA + H(+). The protein operates within metabolic intermediate biosynthesis; (R)-mevalonate biosynthesis; (R)-mevalonate from acetyl-CoA: step 2/3. In terms of biological role, condenses acetyl-CoA with acetoacetyl-CoA to form HMG-CoA, which is the substrate for HMG-CoA reductase. The polypeptide is Hydroxymethylglutaryl-CoA synthase A (hgsA) (Dictyostelium discoideum (Social amoeba)).